A 100-amino-acid chain; its full sequence is Large ribosomal subunit protein uL23 (100 aa).

Belongs to the universal ribosomal protein uL23 family. As to quaternary structure, part of the 50S ribosomal subunit. Contacts protein L29, and trigger factor when it is bound to the ribosome.

One of the early assembly proteins it binds 23S rRNA. One of the proteins that surrounds the polypeptide exit tunnel on the outside of the ribosome. Forms the main docking site for trigger factor binding to the ribosome. The sequence is that of Large ribosomal subunit protein uL23 from Vibrio atlanticus (strain LGP32) (Vibrio splendidus (strain Mel32)).